Here is a 208-residue protein sequence, read N- to C-terminus: Uracil phosphoribosyltransferase (208 aa).

Residues R78, R103, and 130–138 (DPMLAIGGS) contribute to the 5-phospho-alpha-D-ribose 1-diphosphate site. Residues I193 and 198 to 200 (GDA) contribute to the uracil site. Residue D199 coordinates 5-phospho-alpha-D-ribose 1-diphosphate.

It belongs to the UPRTase family. It depends on Mg(2+) as a cofactor.

It catalyses the reaction UMP + diphosphate = 5-phospho-alpha-D-ribose 1-diphosphate + uracil. It functions in the pathway pyrimidine metabolism; UMP biosynthesis via salvage pathway; UMP from uracil: step 1/1. Its activity is regulated as follows. Allosterically activated by GTP. Functionally, catalyzes the conversion of uracil and 5-phospho-alpha-D-ribose 1-diphosphate (PRPP) to UMP and diphosphate. In Vibrio cholerae serotype O1 (strain ATCC 39315 / El Tor Inaba N16961), this protein is Uracil phosphoribosyltransferase.